The primary structure comprises 895 residues: Probable inorganic carbon transporter subunit DabA 1 (895 aa).

4 residues coordinate Zn(2+): Cys398, Asp400, His581, and Cys596.

Belongs to the inorganic carbon transporter (TC 9.A.2) DabA family. In terms of assembly, forms a complex with DabB. Zn(2+) serves as cofactor.

Its subcellular location is the cell inner membrane. Its function is as follows. Part of an energy-coupled inorganic carbon pump. The chain is Probable inorganic carbon transporter subunit DabA 1 from Rhodopirellula baltica (strain DSM 10527 / NCIMB 13988 / SH1).